A 169-amino-acid polypeptide reads, in one-letter code: Fumarase E (169 aa).

This sequence belongs to the MtlR/FumE family.

The enzyme catalyses (S)-malate = fumarate + H2O. In vitro catalyzes the addition of water to fumarate, forming malate. Cannot catalyze the reverse reaction. Cannot use the cis-isomer maleate as substrate. The chain is Fumarase E from Escherichia coli (strain K12).